Consider the following 343-residue polypeptide: 3-oxopimeloyl-[acyl-carrier-protein] synthase (343 aa).

Residues Cys-132 and His-272 contribute to the active site. An ACP-binding region spans residues 273–277 (QANHR). The active site involves Asn-302.

Belongs to the thiolase-like superfamily. BioZ family.

It carries out the reaction malonyl-[ACP] + an acyl-CoA + H(+) = a 3-oxoacyl-[ACP] + CO2 + CoA. It catalyses the reaction glutaryl-CoA + malonyl-[ACP] + H(+) = 3-oxo-6-carboxyhexanoyl-[ACP] + CO2 + CoA. The protein operates within cofactor biosynthesis; biotin biosynthesis. In terms of biological role, involved in the formation of the biotin precursor pimeloyl-ACP. Catalyzes the condensation of glutaryl-CoA, an intermediate in lysine degradation, with malonyl-ACP to produce 3-oxopimeloyl-ACP. The polypeptide is 3-oxopimeloyl-[acyl-carrier-protein] synthase (Rhodothermus marinus (strain ATCC 43812 / DSM 4252 / R-10) (Rhodothermus obamensis)).